A 103-amino-acid chain; its full sequence is Co-chaperonin GroES (103 aa).

The protein belongs to the GroES chaperonin family. Heptamer of 7 subunits arranged in a ring. Interacts with the chaperonin GroEL.

The protein resides in the cytoplasm. Together with the chaperonin GroEL, plays an essential role in assisting protein folding. The GroEL-GroES system forms a nano-cage that allows encapsulation of the non-native substrate proteins and provides a physical environment optimized to promote and accelerate protein folding. GroES binds to the apical surface of the GroEL ring, thereby capping the opening of the GroEL channel. This chain is Co-chaperonin GroES, found in Synechococcus elongatus (strain ATCC 33912 / PCC 7942 / FACHB-805) (Anacystis nidulans R2).